A 244-amino-acid chain; its full sequence is Probable septum site-determining protein MinC (244 aa).

This sequence belongs to the MinC family. As to quaternary structure, interacts with MinD and FtsZ.

In terms of biological role, cell division inhibitor that blocks the formation of polar Z ring septums. Rapidly oscillates between the poles of the cell to destabilize FtsZ filaments that have formed before they mature into polar Z rings. Prevents FtsZ polymerization. The protein is Probable septum site-determining protein MinC of Dichelobacter nodosus (strain VCS1703A).